The primary structure comprises 425 residues: Palmitoyltransferase ZDHHC23 (425 aa).

Over 1 to 81 (MKPVKKKKTE…RIPWLRGAKK (81 aa)) the chain is Cytoplasmic. A helical membrane pass occupies residues 82–99 (VNISIVPPLVLLPVFLHV). Residues 100–102 (ASW) are Lumenal-facing. Residues 103-125 (HFLLGVVVLTSLPMLALWYYYLT) form a helical membrane-spanning segment. Residues 126 to 130 (HRRKE) lie on the Cytoplasmic side of the membrane. Residues 131–151 (QTLFFLSLGLFSLGYMYYVFL) traverse the membrane as a helical segment. Residues 152 to 159 (REVVPQGR) lie on the Lumenal side of the membrane. Residues 160–180 (VGPTQLALLTCGLLLILLALY) traverse the membrane as a helical segment. Topologically, residues 181–292 (RAKKNPGYLS…NSCVGESNHQ (112 aa)) are cytoplasmic. Residues 249–299 (DWCAKCQLVRPARAWHCRICGICVRRMDHHCVWINSCVGESNHQAFILALS) enclose the DHHC domain. The active-site S-palmitoyl cysteine intermediate is Cys-279. Residues 293–313 (AFILALSIFLLTSVYGISLTL) traverse the membrane as a helical segment. At 314–343 (NTICRDRSLFTALFYCPGVYANYSSALSFT) the chain is on the lumenal side. Residues 344 to 364 (CVWYSVIITAGMAYIFLIQLI) form a helical membrane-spanning segment. At 365–425 (NISYNVTERE…TVHTPAEDIV (61 aa)) the chain is on the cytoplasmic side. Residues 422–425 (EDIV) form an interaction with NOS1 region.

Belongs to the DHHC palmitoyltransferase family. In terms of assembly, interacts with NOS1. Expressed in the brain.

It is found in the golgi apparatus membrane. The protein localises to the golgi apparatus. The protein resides in the trans-Golgi network membrane. It carries out the reaction L-cysteinyl-[protein] + hexadecanoyl-CoA = S-hexadecanoyl-L-cysteinyl-[protein] + CoA. In terms of biological role, palmitoyltransferase that could catalyze the addition of palmitate onto various protein substrates and be involved in a variety of cellular processes. Palmitoyltransferase that mediates palmitoylation of KCNMA1, regulating localization of KCNMA1 to the plasma membrane. May be involved in NOS1 regulation and targeting to the synaptic membrane. The polypeptide is Palmitoyltransferase ZDHHC23 (Mus musculus (Mouse)).